A 621-amino-acid polypeptide reads, in one-letter code: MAU2 chromatid cohesion factor homolog (621 aa).

TPR repeat units lie at residues 96-129 (FDTASLLAQLHLQTEQSSHAKAMLRRAVELSQNN), 451-484 (GGFYYVQGLHAFHKNSFHEAKRFLRETLKMANAE), and 491-524 (SCSLVLLSHVFLSIGNSKESMNMVTPAMQLASKI).

This sequence belongs to the SCC4/mau-2 family. Interacts with Nipped-B to form the cohesin loading complex.

The protein localises to the nucleus. Its subcellular location is the nucleoplasm. Functionally, required for association of the cohesin complex with chromatin during interphase. Plays a role in sister chromatid cohesion and normal progression through prometaphase. This chain is MAU2 chromatid cohesion factor homolog, found in Drosophila virilis (Fruit fly).